A 202-amino-acid polypeptide reads, in one-letter code: GTP cyclohydrolase-2 (202 aa).

49 to 53 (RIHSE) provides a ligand contact to GTP. Cysteine 54, cysteine 65, and cysteine 67 together coordinate Zn(2+). GTP-binding positions include glutamine 70, 92–94 (EGR), and threonine 114. Catalysis depends on aspartate 126, which acts as the Proton acceptor. Residue arginine 128 is the Nucleophile of the active site. The GTP site is built by threonine 149 and lysine 154.

This sequence belongs to the GTP cyclohydrolase II family. The cofactor is Zn(2+).

The catalysed reaction is GTP + 4 H2O = 2,5-diamino-6-hydroxy-4-(5-phosphoribosylamino)-pyrimidine + formate + 2 phosphate + 3 H(+). It functions in the pathway cofactor biosynthesis; riboflavin biosynthesis; 5-amino-6-(D-ribitylamino)uracil from GTP: step 1/4. Catalyzes the conversion of GTP to 2,5-diamino-6-ribosylamino-4(3H)-pyrimidinone 5'-phosphate (DARP), formate and pyrophosphate. This is GTP cyclohydrolase-2 from Shewanella frigidimarina (strain NCIMB 400).